The sequence spans 188 residues: Tuftelin (188 aa).

Residues 1 to 181 (SLRKTVQDLL…DRMEHLIEKQ (181 aa)) adopt a coiled-coil conformation.

Belongs to the tuftelin family. Interacts with TFIP11.

The protein resides in the secreted. Functionally, involved in the structural organization of the epidermis. Involved in the mineralization and structural organization of enamel. The polypeptide is Tuftelin (TUFT1) (Sus scrofa (Pig)).